The following is a 382-amino-acid chain: Toluene efflux pump periplasmic linker protein TtgD (382 aa).

A signal peptide spans 1-23 (MRLERALRARQLIPLAAIWLLVG). Residue cysteine 24 is the site of N-palmitoyl cysteine attachment. The S-diacylglycerol cysteine moiety is linked to residue cysteine 24. A coiled-coil region spans residues 100 to 136 (YEALLARAEASLLTAQNLARRYERLLDTNAISQQQYD).

The protein belongs to the membrane fusion protein (MFP) (TC 8.A.1) family.

The protein localises to the cell inner membrane. The periplasmic linker protein component of an inducible organic solvent efflux pump. Involved in export of toluene and styrene but not of m-xylene, propylbenzene or ethylbenzene. Is not involved in antibiotic or AMP efflux. In Pseudomonas putida (strain DOT-T1E), this protein is Toluene efflux pump periplasmic linker protein TtgD (ttgD).